The following is a 103-amino-acid chain: Large ribosomal subunit protein bL21 (103 aa).

The protein belongs to the bacterial ribosomal protein bL21 family. Part of the 50S ribosomal subunit. Contacts protein L20.

In terms of biological role, this protein binds to 23S rRNA in the presence of protein L20. This is Large ribosomal subunit protein bL21 from Thermobifida fusca (strain YX).